Consider the following 1613-residue polypeptide: Reverse gyrase (1613 aa).

The segment at 1–38 (MIPMIYKEMCPNCNGEITSERLAIGVCEKCLKEENVFE) adopts an RG N-terminal-type zinc-finger fold. The Zn(2+) site is built by Cys-10, Cys-13, Cys-27, and Cys-30. Residues Gln-83 and 100–107 (VPTGVGKS) each bind ATP. The Helicase ATP-binding domain occupies 87–291 (AKRVLKNKSF…LYRELLDFEI (205 aa)). A DEAD box motif is present at residues 203-206 (DDVD). Residues 310–525 (SKEKILEYIK…IDEVNLEELI (216 aa)) enclose the Helicase C-terminal domain. The interval 546-1613 (DLLKSVLMVV…ALHEEILSIR (1068 aa)) is topoisomerase I. The region spanning 550 to 712 (SVLMVVESPN…NIYRVGFNEI (163 aa)) is the Toprim domain. Mg(2+)-binding residues include Glu-556 and Asp-681. In terms of domain architecture, Topo IA-type catalytic spans 733-1613 (DENKVKGQVV…ALHEEILSIR (881 aa)). In terms of domain architecture, DOD-type homing endonuclease spans 1070–1199 (FAGLVLGDGS…IGIYLNSIGI (130 aa)). Tyr-1363 (O-(5'-phospho-DNA)-tyrosine intermediate) is an active-site residue.

This sequence in the N-terminal section; belongs to the DEAD box helicase family. DDVD subfamily. In the C-terminal section; belongs to the type IA topoisomerase family. As to quaternary structure, monomer. Zn(2+) serves as cofactor. The cofactor is Mg(2+). Post-translationally, this protein undergoes a protein self splicing that involves a post-translational excision of the intervening region (intein) followed by peptide ligation.

The protein localises to the cytoplasm. It carries out the reaction ATP + H2O = ADP + phosphate + H(+). Its function is as follows. Modifies the topological state of DNA by introducing positive supercoils in an ATP-dependent process, increasing the linking number in steps of +1. Binds to single-stranded DNA, transiently cleaves and then rejoins the ends, introducing a positive supercoil in the process. The scissile phosphodiester is attacked by the catalytic tyrosine of the enzyme, resulting in the formation of a DNA-(5'-phosphotyrosyl)-enzyme intermediate. Probably involved in rewinding DNA strands in regions of the chromosome that have opened up to allow replication, transcription, DNA repair and/or for DNA protection. This is Reverse gyrase from Methanocaldococcus jannaschii (strain ATCC 43067 / DSM 2661 / JAL-1 / JCM 10045 / NBRC 100440) (Methanococcus jannaschii).